The sequence spans 415 residues: Putative competence-damage inducible protein (415 aa).

The protein belongs to the CinA family.

This Limosilactobacillus reuteri (strain DSM 20016) (Lactobacillus reuteri) protein is Putative competence-damage inducible protein.